The following is a 298-amino-acid chain: MVVKPEWLRVKAPQWQRVGSVKELLRDLNLNTVCEEASCPNIGECFYQGTATFLMMGPACTRACPYCDIDFEKKPLPLDPTEPQRLAEAVVRMRLNHVVITSVNRDDLADGGASQFVATIEAVRQRSPQTTIEVLIPDLCGNWQALDQILAAGPEVLNHNTETVPRLYRRVRPQGNYQRSLELLQRVRDRAPWIYSKSGIMVGLGETSEEVVALMQDLRQVGCDILTIGQYLQPSPKHLAVQAFIPPEQFEEWRRLGESMGFLQVVSSPLTRSSYHAEQVRALMQQYPRQRPAPSPLG.

Positions 34, 39, 45, 60, 64, 67, and 274 each coordinate [4Fe-4S] cluster. The region spanning 46 to 263 (FYQGTATFLM…RRLGESMGFL (218 aa)) is the Radical SAM core domain.

It belongs to the radical SAM superfamily. Lipoyl synthase family. [4Fe-4S] cluster serves as cofactor.

Its subcellular location is the cytoplasm. It carries out the reaction [[Fe-S] cluster scaffold protein carrying a second [4Fe-4S](2+) cluster] + N(6)-octanoyl-L-lysyl-[protein] + 2 oxidized [2Fe-2S]-[ferredoxin] + 2 S-adenosyl-L-methionine + 4 H(+) = [[Fe-S] cluster scaffold protein] + N(6)-[(R)-dihydrolipoyl]-L-lysyl-[protein] + 4 Fe(3+) + 2 hydrogen sulfide + 2 5'-deoxyadenosine + 2 L-methionine + 2 reduced [2Fe-2S]-[ferredoxin]. Its pathway is protein modification; protein lipoylation via endogenous pathway; protein N(6)-(lipoyl)lysine from octanoyl-[acyl-carrier-protein]: step 2/2. In terms of biological role, catalyzes the radical-mediated insertion of two sulfur atoms into the C-6 and C-8 positions of the octanoyl moiety bound to the lipoyl domains of lipoate-dependent enzymes, thereby converting the octanoylated domains into lipoylated derivatives. In Thermosynechococcus vestitus (strain NIES-2133 / IAM M-273 / BP-1), this protein is Lipoyl synthase 1.